A 201-amino-acid polypeptide reads, in one-letter code: Urease accessory protein UreG (201 aa).

11 to 18 is a GTP binding site; sequence GPVGSGKT.

Belongs to the SIMIBI class G3E GTPase family. UreG subfamily. As to quaternary structure, homodimer. UreD, UreF and UreG form a complex that acts as a GTP-hydrolysis-dependent molecular chaperone, activating the urease apoprotein by helping to assemble the nickel containing metallocenter of UreC. The UreE protein probably delivers the nickel.

The protein resides in the cytoplasm. In terms of biological role, facilitates the functional incorporation of the urease nickel metallocenter. This process requires GTP hydrolysis, probably effectuated by UreG. The chain is Urease accessory protein UreG from Synechococcus sp. (strain CC9902).